The chain runs to 267 residues: MSEVKIRGIVLDSLNYEENDKIITVYSDEFGKLSFIALGANKASSKNNYSLNVFSESDFEIFKSRKTQSISKLKTGILVRNNFKIAKSYNNYLFASIISSVILQEELFYNKDFKLFDMLREAIRNINDEVNPFSNMVWFLFYSLKNFGGYWELNKCYRCNKASKIYRKFDLQHYGLVCPNCINENEEEHDYEFIKYLQRMDNNTFFTIQKFPINVSFEIIISKLLFSYYLNEIGIYSYPMNEILKKEVYKDDTFWEYTHKVLTKNSI.

It belongs to the RecO family.

Its function is as follows. Involved in DNA repair and RecF pathway recombination. The chain is DNA repair protein RecO from Mesoplasma florum (strain ATCC 33453 / NBRC 100688 / NCTC 11704 / L1) (Acholeplasma florum).